Reading from the N-terminus, the 223-residue chain is Phosphoribosylformylglycinamidine synthase subunit PurQ (223 aa).

The Glutamine amidotransferase type-1 domain maps to 3–223; it reads FAVLVFPGSN…MVKSWREQHV (221 aa). Cys85 functions as the Nucleophile in the catalytic mechanism. Catalysis depends on residues His193 and Glu195.

In terms of assembly, part of the FGAM synthase complex composed of 1 PurL, 1 PurQ and 2 PurS subunits.

It is found in the cytoplasm. It catalyses the reaction N(2)-formyl-N(1)-(5-phospho-beta-D-ribosyl)glycinamide + L-glutamine + ATP + H2O = 2-formamido-N(1)-(5-O-phospho-beta-D-ribosyl)acetamidine + L-glutamate + ADP + phosphate + H(+). The enzyme catalyses L-glutamine + H2O = L-glutamate + NH4(+). It functions in the pathway purine metabolism; IMP biosynthesis via de novo pathway; 5-amino-1-(5-phospho-D-ribosyl)imidazole from N(2)-formyl-N(1)-(5-phospho-D-ribosyl)glycinamide: step 1/2. Functionally, part of the phosphoribosylformylglycinamidine synthase complex involved in the purines biosynthetic pathway. Catalyzes the ATP-dependent conversion of formylglycinamide ribonucleotide (FGAR) and glutamine to yield formylglycinamidine ribonucleotide (FGAM) and glutamate. The FGAM synthase complex is composed of three subunits. PurQ produces an ammonia molecule by converting glutamine to glutamate. PurL transfers the ammonia molecule to FGAR to form FGAM in an ATP-dependent manner. PurS interacts with PurQ and PurL and is thought to assist in the transfer of the ammonia molecule from PurQ to PurL. In Staphylococcus aureus (strain MRSA252), this protein is Phosphoribosylformylglycinamidine synthase subunit PurQ.